Reading from the N-terminus, the 640-residue chain is Probable threonine--tRNA ligase, cytoplasmic (640 aa).

The 63-residue stretch at 1–63 (MYEVKLKVEL…LKDCKLELMT (63 aa)) folds into the TGS domain.

Belongs to the class-II aminoacyl-tRNA synthetase family.

It is found in the cytoplasm. It carries out the reaction tRNA(Thr) + L-threonine + ATP = L-threonyl-tRNA(Thr) + AMP + diphosphate + H(+). This Encephalitozoon cuniculi (strain GB-M1) (Microsporidian parasite) protein is Probable threonine--tRNA ligase, cytoplasmic.